We begin with the raw amino-acid sequence, 1180 residues long: Tudor domain-containing protein 1 (1180 aa).

Disordered regions lie at residues 1 to 66 and 79 to 138; these read MSVK…KKNN and SQED…RPAK. Residues 27 to 41 are compositionally biased toward basic and acidic residues; the sequence is NFEKNENKLPPHESL. 2 stretches are compositionally biased toward polar residues: residues 79 to 91 and 110 to 122; these read SQEDNSVSSNPNG and NSVSPPSAESNSP. Zn(2+)-binding residues include cysteine 170, cysteine 173, cysteine 181, cysteine 184, cysteine 190, cysteine 194, histidine 202, and cysteine 206. The MYND-type zinc-finger motif lies at 170-206; it reads CHRCGLFGSLRCSQCKQTYYCSTACQRRDWSAHSIVC. One can recognise a Tudor 1 domain in the interval 312 to 372; that stretch reads IPVKGEVCIA…YHLNRNIDLF (61 aa). Residues 450 to 469 are disordered; that stretch reads SGQDSKKENADQSDPEDVGK. Tudor domains lie at 541 to 600, 762 to 821, and 990 to 1048; these read YPAI…LLEL, KAEI…FLNL, and RPRI…HLAL.

The protein belongs to the TDRD1 family. As to quaternary structure, found in a mRNP complex, at least composed of TDRD1, TDRD6, TDRD7 and DDX4. Interacts with MAEL. Interacts with PIWIL1, PIWIL2 and PIWIL4 (when methylated on arginine residues). Interacts with TDRD12. Testis and ovary specific. Also expressed in several cancers.

It localises to the cytoplasm. In terms of biological role, plays a central role during spermatogenesis by participating in the repression transposable elements and preventing their mobilization, which is essential for the germline integrity. Acts via the piRNA metabolic process, which mediates the repression of transposable elements during meiosis by forming complexes composed of piRNAs and Piwi proteins and governs the methylation and subsequent repression of transposons. Required for the localization of Piwi proteins to the meiotic nuage. Involved in the piRNA metabolic process by ensuring the entry of correct transcripts into the normal piRNA pool and limiting the entry of cellular transcripts into the piRNA pathway. May act by allowing the recruitment of piRNA biogenesis or loading factors that ensure the correct entry of transcripts and piRNAs into Piwi proteins. The chain is Tudor domain-containing protein 1 (TDRD1) from Homo sapiens (Human).